The following is an 80-amino-acid chain: Small ribosomal subunit protein bS18 (80 aa).

The protein belongs to the bacterial ribosomal protein bS18 family. Part of the 30S ribosomal subunit. Forms a tight heterodimer with protein bS6.

Functionally, binds as a heterodimer with protein bS6 to the central domain of the 16S rRNA, where it helps stabilize the platform of the 30S subunit. This is Small ribosomal subunit protein bS18 from Staphylococcus carnosus (strain TM300).